Reading from the N-terminus, the 89-residue chain is Ragulator complex protein LAMTOR5 homolog (89 aa).

It belongs to the LAMTOR5 family. In terms of assembly, part of the Ragulator complex.

It localises to the cytoplasm. It is found in the lysosome. In terms of biological role, regulator of the TOR pathway, a signaling cascade that promotes cell growth in response to growth factors, energy levels, and amino acids. As part of the Ragulator complex, may activate the TOR signaling cascade in response to amino acids. This is Ragulator complex protein LAMTOR5 homolog from Dictyostelium discoideum (Social amoeba).